The primary structure comprises 290 residues: Protein SSO1 (290 aa).

At 1-265 (MSYNNPYQLE…ARKARKNKIR (265 aa)) the chain is on the cytoplasmic side. One can recognise a t-SNARE coiled-coil homology domain in the interval 190 to 252 (LAEVQARHQE…EQGVGHTDKA (63 aa)). Residues 266-287 (CWLIVFAIIVVVVVVVVVPAVV) form a helical; Anchor for type IV membrane protein membrane-spanning segment. Residues 288–290 (KTR) are Extracellular-facing.

It belongs to the syntaxin family.

It localises to the membrane. Functionally, required for vesicle fusion with the plasma membrane. This Saccharomyces cerevisiae (strain ATCC 204508 / S288c) (Baker's yeast) protein is Protein SSO1 (SSO1).